The following is a 314-amino-acid chain: Homoserine kinase (314 aa).

An ATP-binding site is contributed by 96 to 106 (PIGSGLGSSAC).

It belongs to the GHMP kinase family. Homoserine kinase subfamily.

The protein localises to the cytoplasm. The catalysed reaction is L-homoserine + ATP = O-phospho-L-homoserine + ADP + H(+). It participates in amino-acid biosynthesis; L-threonine biosynthesis; L-threonine from L-aspartate: step 4/5. In terms of biological role, catalyzes the ATP-dependent phosphorylation of L-homoserine to L-homoserine phosphate. This Histophilus somni (strain 129Pt) (Haemophilus somnus) protein is Homoserine kinase.